Here is an 89-residue protein sequence, read N- to C-terminus: UPF0223 protein BCG9842_B1176 (89 aa).

This sequence belongs to the UPF0223 family.

The sequence is that of UPF0223 protein BCG9842_B1176 from Bacillus cereus (strain G9842).